We begin with the raw amino-acid sequence, 506 residues long: MLPQLSIERASVFALGLIATGSLVVAGPCDIYSAGGTPCVAAHSTTRALYSSYSGPLYQVKRGSDGATADIAPLSAGGVANAAAQDSFCDGTTCLITIIYDQSGRGNHLTQAPPGGFSGPESNGYDNLASAIGAPVTLNGQKAYGVFISPGTGYRNNAASGTATGDAPEGMYAVLDGTHYNDACCFDYGNAETSSRDTGNGHMEAIYFGDNTIWGTGSGSGPWIMADLENGLFSGSSPDNNSGDPSISYRFLTAVVKGKQNQWAIRGANAASGSLSTFYNGARPSVSGYNPMSKEGAIILGIGGDNSNGAQGTFYEGVMTSGYPSDATENSVQANIVAAKYATASLTSGPKLTVGSSISLQATTPGYTTRYIAHSGSTVNTQVVSSSSSTTLKQQASWTVRTGLANSDCFSFESRDTPGSFLRHYNFVLQLSANDGTKQFHEDATFCPQAGLNGQGNSIRSWNYPTRYFRHYNNVLYAASNGGVHTFDATSSFNNDVSWVISTGFA.

The N-terminal stretch at 1–26 (MLPQLSIERASVFALGLIATGSLVVA) is a signal peptide. The interval 27-343 (GPCDIYSAGG…ANIVAAKYAT (317 aa)) is catalytic. 3 disulfide bridges follow: C29–C39, C89–C94, and C184–C185. D227 provides a ligand contact to substrate. Catalysis depends on E229, which acts as the Nucleophile. N230 is a substrate binding site. N240 carries an N-linked (GlcNAc...) asparagine glycan. Substrate is bound at residue G304. The active-site Proton donor is the D305. The ABD stretch occupies residues 344–506 (ASLTSGPKLT…VSWVISTGFA (163 aa)). C409 and C447 are joined by a disulfide. Substrate-binding residues include H424, N426, F427, D443, H471, L476, and D496.

Belongs to the glycosyl hydrolase 54 family.

The protein resides in the secreted. The catalysed reaction is Hydrolysis of terminal non-reducing alpha-L-arabinofuranoside residues in alpha-L-arabinosides.. It functions in the pathway glycan metabolism; L-arabinan degradation. Functionally, alpha-L-arabinofuranosidase involved in the degradation of arabinoxylan, a major component of plant hemicellulose. Able to hydrolyze 1,5-, 1,3- and 1,2-alpha-linkages not only in L-arabinofuranosyl oligosaccharides, but also in polysaccharides containing terminal non-reducing L-arabinofuranoses in side chains, like L-arabinan, arabinogalactan and arabinoxylan. In Aspergillus fumigatus (strain ATCC MYA-4609 / CBS 101355 / FGSC A1100 / Af293) (Neosartorya fumigata), this protein is Probable alpha-L-arabinofuranosidase B (abfB).